The sequence spans 124 residues: Keratin-associated protein 12-2 (124 aa).

Repeat copies occupy residues 10–13, 14–18, 19–23, 24–28, 33–38, 39–43, 44–48, 49–52, 53–57, 58–62, 63–67, 68–72, 73–77, 78–82, 83–87, 88–92, 98–102, 103–107, 108–112, and 113–117. The 20 X 5 AA approximate repeats stretch occupies residues 10–117; sequence CQAACVPSSC…CPTLVYRPIS (108 aa).

The protein belongs to the KRTAP type 12 family. Interacts with hair keratins.

In terms of biological role, in the hair cortex, hair keratin intermediate filaments are embedded in an interfilamentous matrix, consisting of hair keratin-associated proteins (KRTAP), which are essential for the formation of a rigid and resistant hair shaft through their extensive disulfide bond cross-linking with abundant cysteine residues of hair keratins. The matrix proteins include the high-sulfur and high-glycine-tyrosine keratins. This Bos taurus (Bovine) protein is Keratin-associated protein 12-2.